Here is a 417-residue protein sequence, read N- to C-terminus: UDP-N-acetylglucosamine 1-carboxyvinyltransferase (417 aa).

Residue 22 to 23 (KN) participates in phosphoenolpyruvate binding. Arg-93 provides a ligand contact to UDP-N-acetyl-alpha-D-glucosamine. Cys-117 acts as the Proton donor in catalysis. Cys-117 carries the post-translational modification 2-(S-cysteinyl)pyruvic acid O-phosphothioketal. UDP-N-acetyl-alpha-D-glucosamine-binding positions include 122–126 (RPVDQ), Asp-304, and Ile-326.

The protein belongs to the EPSP synthase family. MurA subfamily.

Its subcellular location is the cytoplasm. It carries out the reaction phosphoenolpyruvate + UDP-N-acetyl-alpha-D-glucosamine = UDP-N-acetyl-3-O-(1-carboxyvinyl)-alpha-D-glucosamine + phosphate. Its pathway is cell wall biogenesis; peptidoglycan biosynthesis. Functionally, cell wall formation. Adds enolpyruvyl to UDP-N-acetylglucosamine. This chain is UDP-N-acetylglucosamine 1-carboxyvinyltransferase, found in Neisseria meningitidis serogroup B (strain ATCC BAA-335 / MC58).